The chain runs to 165 residues: Putative universal stress protein SH1215 (165 aa).

It belongs to the universal stress protein A family.

It localises to the cytoplasm. The polypeptide is Putative universal stress protein SH1215 (Staphylococcus haemolyticus (strain JCSC1435)).